The sequence spans 1081 residues: Zinc finger protein 827 (1081 aa).

Over residues 1-10 (MPRRKQEQPK) the composition is skewed to basic and acidic residues. Residues 1-14 (MPRRKQEQPKRLPS) form a mediates direct interaction with RBBP4 region. The segment at 1–77 (MPRRKQEQPK…DTSLGSTTPS (77 aa)) is disordered. The RRK motif; mediates NuRD recruitment to telomeres motif lies at 3–5 (RRK). A compositionally biased stretch (polar residues) spans 62 to 77 (EQSTSPDTSLGSTTPS). Glycyl lysine isopeptide (Lys-Gly) (interchain with G-Cter in SUMO2) cross-links involve residues K176, K216, and K226. 2 disordered regions span residues 259-278 (KVSERSLTPGQEHPPPASSF) and 307-348 (SSLL…SLEL). Positions 327–344 (VTPPPPPPPPPPPPPPPQ) are enriched in pro residues. Glycyl lysine isopeptide (Lys-Gly) (interchain with G-Cter in SUMO2) cross-links involve residues K360 and K372. C2H2-type zinc fingers lie at residues 374 to 396 (FQCPICGLVIKRKSYWKRHMVIH), 402 to 424 (HQCPLCPFRCARKDNLKSHMKVH), and 433 to 455 (FQCQLCPFTSSRHFSLKLHMRCH). Glycyl lysine isopeptide (Lys-Gly) (interchain with G-Cter in SUMO2) cross-links involve residues K466, K475, K523, K549, K580, K587, K597, K634, K639, and K658. K673 participates in a covalent cross-link: Glycyl lysine isopeptide (Lys-Gly) (interchain with G-Cter in SUMO1); alternate. K673 participates in a covalent cross-link: Glycyl lysine isopeptide (Lys-Gly) (interchain with G-Cter in SUMO2); alternate. Residues K704, K710, K742, K778, and K798 each participate in a glycyl lysine isopeptide (Lys-Gly) (interchain with G-Cter in SUMO2) cross-link. C2H2-type zinc fingers lie at residues 817–839 (FPCDVCGKVFGRQQTLSRHLSLH) and 845–867 (YKCHLCPYAAKCRANLNQHLTVH). Glycyl lysine isopeptide (Lys-Gly) (interchain with G-Cter in SUMO2) cross-links involve residues K870 and K891. C2H2-type zinc fingers lie at residues 897-919 (YSCHVCGFETELNVQFVSHMSLH) and 929-952 (ICCTACDFVTMEEAEIKTHIGTKH). The span at 947 to 960 (HIGTKHTGEDRKTP) shows a compositional bias: basic and acidic residues. The tract at residues 947–996 (HIGTKHTGEDRKTPSESNSPSSSSLSALSDSANSKDDSDGSQKNKGGNNL) is disordered. K958 is covalently cross-linked (Glycyl lysine isopeptide (Lys-Gly) (interchain with G-Cter in SUMO2)). Over residues 961 to 978 (SESNSPSSSSLSALSDSA) the composition is skewed to low complexity. Residues 979 to 988 (NSKDDSDGSQ) are compositionally biased toward basic and acidic residues. Residue K1014 forms a Glycyl lysine isopeptide (Lys-Gly) (interchain with G-Cter in SUMO2) linkage. 2 C2H2-type zinc fingers span residues 1019-1041 (FECVFCNFVCKTKNMFERHLQIH) and 1047-1069 (FECDVCHKFMKTPEQLLEHKKCH).

This sequence belongs to the krueppel C2H2-type zinc-finger protein family. In terms of assembly, part of a transcription inhibitory ribonucleoprotein complex composed at least of the circular RNA circZNF827, HNRNPK and HNRNPL. Interacts with the nucleosome remodeling and histone deacetylase/NuRD complex. Interacts with RBBP4; the interaction is direct and recruits RBBP4, a component of the NuRD complex, to telomeres.

Its subcellular location is the nucleus. It localises to the chromosome. It is found in the telomere. In terms of biological role, as part of a ribonucleoprotein complex composed at least of HNRNPK, HNRNPL and the circular RNA circZNF827 that nucleates the complex on chromatin, may negatively regulate the transcription of genes involved in neuronal differentiation. Could also recruit the nucleosome remodeling and histone deacetylase/NuRD complex to telomeric regions of chromosomes to regulate chromatin remodeling as part of telomere maintenance. The protein is Zinc finger protein 827 (ZNF827) of Homo sapiens (Human).